We begin with the raw amino-acid sequence, 88 residues long: MKFFLLFLVVLPIMGVLGKKNGYAVDSKGKAPECFLSNYCNNECTKVHYADKGYCCLLSCYCFGLNDDKKVLEISDTTKKYCDFTIIN.

The signal sequence occupies residues 1–18 (MKFFLLFLVVLPIMGVLG). The LCN-type CS-alpha/beta domain maps to 20–83 (KNGYAVDSKG…ISDTTKKYCD (64 aa)). 4 disulfide bridges follow: Cys34–Cys55, Cys40–Cys60, Cys44–Cys62, and Cys56–Cys82.

This sequence belongs to the long (4 C-C) scorpion toxin superfamily. Sodium channel inhibitor family. Beta subfamily. In terms of tissue distribution, expressed by the venom gland.

The protein resides in the secreted. Excitatory insect toxins induce a spastic paralysis. They bind voltage-independently at site-4 of sodium channels (Nav) and shift the voltage of activation toward more negative potentials thereby affecting sodium channel activation and promoting spontaneous and repetitive firing. This chain is Beta-insect excitatory toxin LqhIT1b, found in Leiurus hebraeus (Hebrew deathstalker scorpion).